Here is a 195-residue protein sequence, read N- to C-terminus: Putative L(+)-tartrate dehydratase subunit beta (195 aa).

His36 is a catalytic residue. Lys104 serves as a coordination point for substrate.

The protein belongs to the class-I fumarase family. Heterotetramer of two alpha and two beta subunits.

The catalysed reaction is (2R,3R)-tartrate = oxaloacetate + H2O. The sequence is that of Putative L(+)-tartrate dehydratase subunit beta from Methanocaldococcus jannaschii (strain ATCC 43067 / DSM 2661 / JAL-1 / JCM 10045 / NBRC 100440) (Methanococcus jannaschii).